We begin with the raw amino-acid sequence, 174 residues long: Peptide methionine sulfoxide reductase MsrA (174 aa).

The active site involves cysteine 11.

Belongs to the MsrA Met sulfoxide reductase family.

It carries out the reaction L-methionyl-[protein] + [thioredoxin]-disulfide + H2O = L-methionyl-(S)-S-oxide-[protein] + [thioredoxin]-dithiol. The enzyme catalyses [thioredoxin]-disulfide + L-methionine + H2O = L-methionine (S)-S-oxide + [thioredoxin]-dithiol. Its function is as follows. Has an important function as a repair enzyme for proteins that have been inactivated by oxidation. Catalyzes the reversible oxidation-reduction of methionine sulfoxide in proteins to methionine. This chain is Peptide methionine sulfoxide reductase MsrA, found in Haloquadratum walsbyi (strain DSM 16790 / HBSQ001).